The chain runs to 250 residues: Methionine aminopeptidase (250 aa).

H77 lines the substrate pocket. A divalent metal cation is bound by residues D95, D106, and H169. H176 is a substrate binding site. 2 residues coordinate a divalent metal cation: E202 and E233.

The protein belongs to the peptidase M24A family. Methionine aminopeptidase type 1 subfamily. In terms of assembly, monomer. It depends on Co(2+) as a cofactor. Requires Zn(2+) as cofactor. The cofactor is Mn(2+). Fe(2+) serves as cofactor.

The catalysed reaction is Release of N-terminal amino acids, preferentially methionine, from peptides and arylamides.. Removes the N-terminal methionine from nascent proteins. The N-terminal methionine is often cleaved when the second residue in the primary sequence is small and uncharged (Met-Ala-, Cys, Gly, Pro, Ser, Thr, or Val). Requires deformylation of the N(alpha)-formylated initiator methionine before it can be hydrolyzed. This is Methionine aminopeptidase from Clostridium acetobutylicum (strain ATCC 824 / DSM 792 / JCM 1419 / IAM 19013 / LMG 5710 / NBRC 13948 / NRRL B-527 / VKM B-1787 / 2291 / W).